We begin with the raw amino-acid sequence, 599 residues long: Elongation factor 4 (599 aa).

The tr-type G domain maps to 2 to 184 (KNIRNFSIIA…RLVRDIPPPE (183 aa)). GTP contacts are provided by residues 14 to 19 (DHGKST) and 131 to 134 (NKID).

It belongs to the TRAFAC class translation factor GTPase superfamily. Classic translation factor GTPase family. LepA subfamily.

It is found in the cell inner membrane. It catalyses the reaction GTP + H2O = GDP + phosphate + H(+). Its function is as follows. Required for accurate and efficient protein synthesis under certain stress conditions. May act as a fidelity factor of the translation reaction, by catalyzing a one-codon backward translocation of tRNAs on improperly translocated ribosomes. Back-translocation proceeds from a post-translocation (POST) complex to a pre-translocation (PRE) complex, thus giving elongation factor G a second chance to translocate the tRNAs correctly. Binds to ribosomes in a GTP-dependent manner. This Escherichia fergusonii (strain ATCC 35469 / DSM 13698 / CCUG 18766 / IAM 14443 / JCM 21226 / LMG 7866 / NBRC 102419 / NCTC 12128 / CDC 0568-73) protein is Elongation factor 4.